Consider the following 295-residue polypeptide: Phosphoribosylaminoimidazole-succinocarboxamide synthase (295 aa).

The protein belongs to the SAICAR synthetase family.

It catalyses the reaction 5-amino-1-(5-phospho-D-ribosyl)imidazole-4-carboxylate + L-aspartate + ATP = (2S)-2-[5-amino-1-(5-phospho-beta-D-ribosyl)imidazole-4-carboxamido]succinate + ADP + phosphate + 2 H(+). Its pathway is purine metabolism; IMP biosynthesis via de novo pathway; 5-amino-1-(5-phospho-D-ribosyl)imidazole-4-carboxamide from 5-amino-1-(5-phospho-D-ribosyl)imidazole-4-carboxylate: step 1/2. In Desulforapulum autotrophicum (strain ATCC 43914 / DSM 3382 / VKM B-1955 / HRM2) (Desulfobacterium autotrophicum), this protein is Phosphoribosylaminoimidazole-succinocarboxamide synthase.